Here is a 272-residue protein sequence, read N- to C-terminus: uncharacterized protein (272 aa).

This is an uncharacterized protein from Bacillus subtilis (strain 168).